We begin with the raw amino-acid sequence, 276 residues long: Tryptase beta-2 (276 aa).

The N-terminal stretch at 1-21 (MLKRRLLLLWALSLLASLVYS) is a signal peptide. The propeptide at 22–31 (APRPANQRVG) is activation peptide. The region spanning 32-273 (IVGGHEASES…YLDWIHRYVP (242 aa)) is the Peptidase S1 domain. Residues C60 and C76 are joined by a disulfide bond. The active-site Charge relay system is the H75. A Phosphotyrosine modification is found at Y98. D122 (charge relay system) is an active-site residue. A glycan (N-linked (GlcNAc...) asparagine) is linked at N133. 3 cysteine pairs are disulfide-bonded: C156–C231, C189–C212, and C221–C249. Catalysis depends on S225, which acts as the Charge relay system.

This sequence belongs to the peptidase S1 family. Tryptase subfamily. Homotetramer. The active tetramer is converted to inactive monomers at neutral and acidic pH in the absence of heparin. Low concentrations of inactive monomers become active monomers at pH 6.0 in the presence of heparin. When the concentration of active monomers is higher, they convert to active monomers and then to active tetramers. These monomers are active and functionally distinct from the tetrameric enzyme. In contrast to the hidden active sites in the tetrameric form, the active site of the monomeric form is accessible for macromolecular proteins and inhibitors, e.g. fibrinogen which is a substrate for the monomeric but not for the tetrameric form. The monomeric form forms a complex with SERPINB6. In terms of tissue distribution, during embryogenesis, detected primarily in skin.

It localises to the secreted. It carries out the reaction Preferential cleavage: Arg-|-Xaa, Lys-|-Xaa, but with more restricted specificity than trypsin.. Tryptase is the major neutral protease present in mast cells and is secreted upon the coupled activation-degranulation response of this cell type. Plays a role in innate immunity. This is Tryptase beta-2 (Tpsb2) from Mus musculus (Mouse).